We begin with the raw amino-acid sequence, 428 residues long: Trigger factor (428 aa).

In terms of domain architecture, PPIase FKBP-type spans 163–248 (GDTVVIDFEG…VHEVKAKQLP (86 aa)).

Belongs to the FKBP-type PPIase family. Tig subfamily.

It localises to the cytoplasm. The enzyme catalyses [protein]-peptidylproline (omega=180) = [protein]-peptidylproline (omega=0). Functionally, involved in protein export. Acts as a chaperone by maintaining the newly synthesized protein in an open conformation. Functions as a peptidyl-prolyl cis-trans isomerase. The polypeptide is Trigger factor (Geobacillus kaustophilus (strain HTA426)).